The chain runs to 389 residues: S-adenosylmethionine synthase (389 aa).

Position 17 (histidine 17) interacts with ATP. Aspartate 19 contributes to the Mg(2+) binding site. Glutamate 45 serves as a coordination point for K(+). 2 residues coordinate L-methionine: glutamate 58 and glutamine 102. Positions 102 to 112 (QSADIAQGVDA) are flexible loop. ATP is bound by residues 167-169 (DAK), aspartate 241, 247-248 (RK), alanine 264, and lysine 268. Aspartate 241 contributes to the L-methionine binding site. Lysine 272 serves as a coordination point for L-methionine.

Belongs to the AdoMet synthase family. In terms of assembly, homotetramer; dimer of dimers. It depends on Mg(2+) as a cofactor. K(+) is required as a cofactor.

The protein resides in the cytoplasm. It catalyses the reaction L-methionine + ATP + H2O = S-adenosyl-L-methionine + phosphate + diphosphate. Its pathway is amino-acid biosynthesis; S-adenosyl-L-methionine biosynthesis; S-adenosyl-L-methionine from L-methionine: step 1/1. Functionally, catalyzes the formation of S-adenosylmethionine (AdoMet) from methionine and ATP. The overall synthetic reaction is composed of two sequential steps, AdoMet formation and the subsequent tripolyphosphate hydrolysis which occurs prior to release of AdoMet from the enzyme. The chain is S-adenosylmethionine synthase from Parvibaculum lavamentivorans (strain DS-1 / DSM 13023 / NCIMB 13966).